We begin with the raw amino-acid sequence, 797 residues long: Probable exo-1,4-beta-xylosidase xlnD (797 aa).

Residues 1–20 form the signal peptide; the sequence is MPGAASIVAVLAALLPTALG. N-linked (GlcNAc...) asparagine glycosylation is found at asparagine 23, asparagine 87, asparagine 142, and asparagine 237. Aspartate 310 is an active-site residue. Asparagine 326, asparagine 391, asparagine 404, asparagine 442, asparagine 479, asparagine 521, asparagine 617, asparagine 644, asparagine 657, asparagine 684, and asparagine 706 each carry an N-linked (GlcNAc...) asparagine glycan.

Belongs to the glycosyl hydrolase 3 family.

Its subcellular location is the secreted. The enzyme catalyses Hydrolysis of (1-&gt;4)-beta-D-xylans, to remove successive D-xylose residues from the non-reducing termini.. It functions in the pathway glycan degradation; xylan degradation. Xylan 1,4-beta-xylosidase involved in the hydrolysis of xylan, a major structural heterogeneous polysaccharide found in plant biomass representing the second most abundant polysaccharide in the biosphere, after cellulose. In Aspergillus flavus (strain ATCC 200026 / FGSC A1120 / IAM 13836 / NRRL 3357 / JCM 12722 / SRRC 167), this protein is Probable exo-1,4-beta-xylosidase xlnD (xlnD).